The primary structure comprises 746 residues: MVPGSEGPARAGGLVADVVFVIEGTANLGPYFEGLRKHYLLPAIEYFNGGPPAETDFGGDYGGTQYSLVVFNTVDCAPESYVQCHAPTSSAYEFVTWLDGIKFMGGGGESCSLIAEGLSTALQLFDDFKKMREQIGQTHRVCLLICNSPPYLLPAVESTTYSGCTTETLVQKIGERGIYFSIVSPRKLPALRLLFEKAAPPAMLEPLQPPADVSQDPRHMVLVRGLVLPVGGGSAPGPLQPKQPVPLPPAAPAGATLSTAPQQPLPPVPQQYQVPGNLSAAQVAAQNAVEAAKNQKAGLGPRFSPINPLQQATPGVGPPYSQTQATQLPPGPPGAPKPPPASQPSLVSTVAPGPGLAPPAQPGAPSMAGTVAPGGVSGPSPAQLGAPALGGQQSVSNKLLAWSGVLEWQEKPKPASVDANTKLTRSLPCQVYVNHGENLKTEQWPQKLIMQLIPQQLLTTLGPLFRNSRMVQFHFTNKDLDSLKGLYRIMGNGFAGCVHFPHTAPCEVRVLMLLYSSKKKIFMGLIPYDQSGFVNGIRQVITNHKQVQQQKLEQQRGMGAQQAPPGLGPILEDQARPSQNLLQLRPPQPQPQGTVGASAAAGQPQPQGAAPAPPGAPQGPPGAAPGPPPPGPLLRPQNPGANPQLRSLLLNPPPPQTGVPPPQASLHHLQPPGAPALLPPPHQGLGQPQLGPPLLHPPPAQSWPAQLPPRASLPGQMLLSGGPRGPVPQPGLQPSVMEDDILMDLI.

The segment at 1–226 (MVPGSEGPAR…PRHMVLVRGL (226 aa)) is interaction with the Mediator complex. 2 disordered regions span residues 233 to 273 (GSAP…QQYQ) and 298 to 390 (GLGP…PALG). Residues 238–251 (PLQPKQPVPLPPAA) show a composition bias toward pro residues. Positions 252–262 (PAGATLSTAPQ) are enriched in low complexity. Over residues 329–342 (PPGPPGAPKPPPAS) the composition is skewed to pro residues. A compositionally biased stretch (low complexity) spans 343–354 (QPSLVSTVAPGP). Residues 389 to 543 (LGGQQSVSNK…VNGIRQVITN (155 aa)) are interaction with VP16. Residues 395–545 (VSNKLLAWSG…GIRQVITNHK (151 aa)) are interaction with CREBBP. The disordered stretch occupies residues 548–746 (QQQKLEQQRG…MEDDILMDLI (199 aa)). 2 interaction with RARA regions span residues 563–652 (APPG…LLNP) and 639–706 (PGAN…WPAQ). Residues 599–610 (AAAGQPQPQGAA) show a composition bias toward low complexity. The span at 611-633 (PAPPGAPQGPPGAAPGPPPPGPL) shows a compositional bias: pro residues. The LXXLL motif signature appears at 645–649 (LRSLL). 3 stretches are compositionally biased toward pro residues: residues 651–663 (NPPP…PPPQ), 672–682 (PGAPALLPPPH), and 690–701 (LGPPLLHPPPAQ). R724 is subject to Asymmetric dimethylarginine. Positions 737–746 (MEDDILMDLI) are enriched in acidic residues.

This sequence belongs to the Mediator complex subunit 25 family. In terms of assembly, component of the Mediator complex, which is composed of MED1, MED4, MED6, MED7, MED8, MED9, MED10, MED11, MED12, MED13, MED13L, MED14, MED15, MED16, MED17, MED18, MED19, MED20, MED21, MED22, MED23, MED24, MED25, MED26, MED27, MED29, MED30, MED31, CCNC, CDK8 and CDC2L6/CDK11. The MED12, MED13, CCNC and CDK8 subunits form a distinct module termed the CDK8 module. Mediator containing the CDK8 module is less active than Mediator lacking this module in supporting transcriptional activation. Individual preparations of the Mediator complex lacking one or more distinct subunits have been variously termed ARC, CRSP, DRIP, PC2, SMCC and TRAP. Interacts with CREBBP. Interacts with ESR1, GR, RARA, RXRA and THRB in a ligand-dependent fashion. Binds the Herpes simplex virus activator VP16.

Its subcellular location is the nucleus. Its function is as follows. Component of the Mediator complex, a coactivator involved in the regulated transcription of nearly all RNA polymerase II-dependent genes. Mediator functions as a bridge to convey information from gene-specific regulatory proteins to the basal RNA polymerase II transcription machinery. Mediator is recruited to promoters by direct interactions with regulatory proteins and serves as a scaffold for the assembly of a functional preinitiation complex with RNA polymerase II and the general transcription factors. Required for RARA/RXRA-mediated transcription. This Bos taurus (Bovine) protein is Mediator of RNA polymerase II transcription subunit 25 (MED25).